A 359-amino-acid chain; its full sequence is Peptide chain release factor 1 (359 aa).

An N5-methylglutamine modification is found at Gln235. The disordered stretch occupies residues 283 to 309 (QKAESERSQARRSQVGSGDRSERIRTY).

The protein belongs to the prokaryotic/mitochondrial release factor family. Methylated by PrmC. Methylation increases the termination efficiency of RF1.

Its subcellular location is the cytoplasm. Peptide chain release factor 1 directs the termination of translation in response to the peptide chain termination codons UAG and UAA. This chain is Peptide chain release factor 1, found in Brucella canis (strain ATCC 23365 / NCTC 10854 / RM-666).